Here is a 77-residue protein sequence, read N- to C-terminus: Large ribosomal subunit protein bL28 (77 aa).

The interval 1-21 (MARVCKVTGKRPMTGNNVSHA) is disordered.

It belongs to the bacterial ribosomal protein bL28 family.

The protein is Large ribosomal subunit protein bL28 of Chromobacterium violaceum (strain ATCC 12472 / DSM 30191 / JCM 1249 / CCUG 213 / NBRC 12614 / NCIMB 9131 / NCTC 9757 / MK).